The primary structure comprises 259 residues: Sphinganine C4-monooxygenase 2 (259 aa).

The next 3 helical transmembrane spans lie at 10–30 (FLGTFVPILVYWVYSGMYICL), 54–74 (AVVKGVLLQQTLQAIISVILF), and 91–111 (ILLLARQFIIAMLVIDTWQYF). The 137-residue stretch at 98 to 234 (FIIAMLVIDT…FVMWDRILGT (137 aa)) folds into the Fatty acid hydroxylase domain. A Histidine box-1 motif is present at residues 113–117 (HRYMH). The short motif at 127 to 131 (HSQHH) is the Histidine box-2 element. The Histidine box-3 signature appears at 206-212 (YHDVHHQ).

This sequence belongs to the sterol desaturase family. Fe cation serves as cofactor. In terms of tissue distribution, ubiquitous, with higher levels in flowers and roots.

The protein localises to the endoplasmic reticulum membrane. The catalysed reaction is a dihydroceramide + 2 Fe(II)-[cytochrome b5] + O2 + 2 H(+) = a phytoceramide + 2 Fe(III)-[cytochrome b5] + H2O. Its pathway is membrane lipid metabolism; sphingolipid biosynthesis. Its function is as follows. Involved in sphingolipid trihydroxy long-chain base (4-hydroxysphinganine) biosynthesis. Can use C18- and C20-sphinganine as substrates to produce C18- and C20-phytosphinganines (D-ribo-2-amino-1,3,4-trihydroxyoctadecane and -eicosane). This Arabidopsis thaliana (Mouse-ear cress) protein is Sphinganine C4-monooxygenase 2 (SBH2).